A 178-amino-acid polypeptide reads, in one-letter code: Ribulose bisphosphate carboxylase small subunit, chloroplastic (178 aa).

A chloroplast-targeting transit peptide spans 1–54 (MASSMISSPAVTTVNRAGAGTVAPFTGLKSMAGFPTRKTNNDIASIASNGGRVQ).

The protein belongs to the RuBisCO small chain family. As to quaternary structure, heterohexadecamer of 8 large and 8 small subunits.

The protein localises to the plastid. The protein resides in the chloroplast. Functionally, ruBisCO catalyzes two reactions: the carboxylation of D-ribulose 1,5-bisphosphate, the primary event in carbon dioxide fixation, as well as the oxidative fragmentation of the pentose substrate. Both reactions occur simultaneously and in competition at the same active site. Although the small subunit is not catalytic it is essential for maximal activity. This Glycine tabacina protein is Ribulose bisphosphate carboxylase small subunit, chloroplastic.